We begin with the raw amino-acid sequence, 288 residues long: ATP synthase gamma chain (288 aa).

This sequence belongs to the ATPase gamma chain family. In terms of assembly, F-type ATPases have 2 components, CF(1) - the catalytic core - and CF(0) - the membrane proton channel. CF(1) has five subunits: alpha(3), beta(3), gamma(1), delta(1), epsilon(1). CF(0) has three main subunits: a, b and c.

The protein localises to the cell inner membrane. Produces ATP from ADP in the presence of a proton gradient across the membrane. The gamma chain is believed to be important in regulating ATPase activity and the flow of protons through the CF(0) complex. This Vibrio cholerae serotype O1 (strain ATCC 39541 / Classical Ogawa 395 / O395) protein is ATP synthase gamma chain.